We begin with the raw amino-acid sequence, 273 residues long: Glutamate racemase (273 aa).

Substrate-binding positions include 7 to 8 (DS) and 39 to 40 (YG). Cys70 serves as the catalytic Proton donor/acceptor. Residue 71–72 (NT) coordinates substrate. The active-site Proton donor/acceptor is the Cys194. A substrate-binding site is contributed by 195 to 196 (TH).

This sequence belongs to the aspartate/glutamate racemases family.

It catalyses the reaction L-glutamate = D-glutamate. It participates in cell wall biogenesis; peptidoglycan biosynthesis. Functionally, provides the (R)-glutamate required for cell wall biosynthesis. This chain is Glutamate racemase, found in Dinoroseobacter shibae (strain DSM 16493 / NCIMB 14021 / DFL 12).